Consider the following 366-residue polypeptide: NADH-quinone oxidoreductase subunit D (366 aa).

This sequence belongs to the complex I 49 kDa subunit family. In terms of assembly, NDH-1 is composed of 14 different subunits. Subunits NuoB, C, D, E, F, and G constitute the peripheral sector of the complex.

Its subcellular location is the cell membrane. The enzyme catalyses a quinone + NADH + 5 H(+)(in) = a quinol + NAD(+) + 4 H(+)(out). Functionally, NDH-1 shuttles electrons from NADH, via FMN and iron-sulfur (Fe-S) centers, to quinones in the respiratory chain. The immediate electron acceptor for the enzyme in this species is believed to be a menaquinone. Couples the redox reaction to proton translocation (for every two electrons transferred, four hydrogen ions are translocated across the cytoplasmic membrane), and thus conserves the redox energy in a proton gradient. The chain is NADH-quinone oxidoreductase subunit D from Bacillus thuringiensis subsp. konkukian (strain 97-27).